A 211-amino-acid polypeptide reads, in one-letter code: MEPAREPPARARPPPPAARPAPAAPRPRSPAEAEARGPEGLLRRSGSGYEGSTSWKAALEDTTTRLLLGAIAVLLFAILVVMSILASKGCIKCETPCPEDWLLYGRKCYYFSEEPRDWNTGRQYCHTHEAALAVIQSQKELEFMFKFTRREPWIGLRRVGDDFHWVNGDPFDPDTFTISGMGECVFVEPTRLVSTECLTTRPWVCSKMAYT.

Positions 1-53 are disordered; it reads MEPAREPPARARPPPPAARPAPAAPRPRSPAEAEARGPEGLLRRSGSGYEGST. A compositionally biased stretch (pro residues) spans 10 to 28; it reads RARPPPPAARPAPAAPRPR. Serine 29 carries the post-translational modification Phosphoserine. Residues 66–86 traverse the membrane as a helical segment; that stretch reads LLLGAIAVLLFAILVVMSILA. A C-type lectin domain is found at 104 to 206; that stretch reads YGRKCYYFSE…CLTTRPWVCS (103 aa). Cystine bridges form between cysteine 125/cysteine 205 and cysteine 184/cysteine 197.

The protein resides in the membrane. The sequence is that of C-type lectin domain family 2 member L (Clec2l) from Mus musculus (Mouse).